A 423-amino-acid chain; its full sequence is 3-phosphoshikimate 1-carboxyvinyltransferase (423 aa).

3-phosphoshikimate-binding residues include lysine 19, serine 20, and arginine 24. Lysine 19 provides a ligand contact to phosphoenolpyruvate. Glycine 89 and arginine 118 together coordinate phosphoenolpyruvate. 3-phosphoshikimate is bound by residues serine 164, serine 165, glutamine 166, serine 192, aspartate 304, and lysine 331. Position 166 (glutamine 166) interacts with phosphoenolpyruvate. Residue aspartate 304 is the Proton acceptor of the active site. Phosphoenolpyruvate contacts are provided by arginine 335 and arginine 377.

It belongs to the EPSP synthase family. Monomer.

Its subcellular location is the cytoplasm. The enzyme catalyses 3-phosphoshikimate + phosphoenolpyruvate = 5-O-(1-carboxyvinyl)-3-phosphoshikimate + phosphate. It participates in metabolic intermediate biosynthesis; chorismate biosynthesis. Its function is as follows. Catalyzes the transfer of the enolpyruvyl moiety of phosphoenolpyruvate (PEP) to the 5-hydroxyl of shikimate-3-phosphate (S3P) to produce enolpyruvyl shikimate-3-phosphate and inorganic phosphate. The sequence is that of 3-phosphoshikimate 1-carboxyvinyltransferase from Korarchaeum cryptofilum (strain OPF8).